The chain runs to 92 residues: MSRSVWKGPFVDAYVLKKAAAVRESGRNEVIKIWSRRSTILPQFVGLTFGVYNGQKHIPVNVTEDMIGQKFGEYSPTRTYYGHAADKKAKRK.

This sequence belongs to the universal ribosomal protein uS19 family.

Its function is as follows. Protein S19 forms a complex with S13 that binds strongly to the 16S ribosomal RNA. This chain is Small ribosomal subunit protein uS19, found in Ruegeria pomeroyi (strain ATCC 700808 / DSM 15171 / DSS-3) (Silicibacter pomeroyi).